A 335-amino-acid chain; its full sequence is Capsular polysaccharide phosphotransferase WcwK (335 aa).

This sequence belongs to the stealth family.

The protein is Capsular polysaccharide phosphotransferase WcwK (wcwK) of Streptococcus pneumoniae.